The chain runs to 72 residues: Translation initiation factor IF-1 (72 aa).

One can recognise an S1-like domain in the interval 1 to 72; that stretch reads MAKDDVIEVE…TRGRITYRYK (72 aa). At Y60 the chain carries Phosphotyrosine.

This sequence belongs to the IF-1 family. In terms of assembly, component of the 30S ribosomal translation pre-initiation complex which assembles on the 30S ribosome in the order IF-2 and IF-3, IF-1 and N-formylmethionyl-tRNA(fMet); mRNA recruitment can occur at any time during PIC assembly.

It localises to the cytoplasm. Functionally, one of the essential components for the initiation of protein synthesis. Stabilizes the binding of IF-2 and IF-3 on the 30S subunit to which N-formylmethionyl-tRNA(fMet) subsequently binds. Helps modulate mRNA selection, yielding the 30S pre-initiation complex (PIC). Upon addition of the 50S ribosomal subunit IF-1, IF-2 and IF-3 are released leaving the mature 70S translation initiation complex. The protein is Translation initiation factor IF-1 of Bacillus licheniformis (strain ATCC 14580 / DSM 13 / JCM 2505 / CCUG 7422 / NBRC 12200 / NCIMB 9375 / NCTC 10341 / NRRL NRS-1264 / Gibson 46).